We begin with the raw amino-acid sequence, 458 residues long: uncharacterized protein (458 aa).

Disordered stretches follow at residues 339–397 (GTGY…ARIL) and 434–458 (YNSE…EDDC). 2 stretches are compositionally biased toward acidic residues: residues 344-390 (SDSD…EEEP) and 436-458 (SEDE…EDDC).

This is an uncharacterized protein from Invertebrate iridescent virus 3 (IIV-3).